We begin with the raw amino-acid sequence, 473 residues long: Putative amidase AmiC (473 aa).

Active-site charge relay system residues include Lys82 and Ser157. Catalysis depends on Ser181, which acts as the Acyl-ester intermediate.

This sequence belongs to the amidase family.

It carries out the reaction a monocarboxylic acid amide + H2O = a monocarboxylate + NH4(+). The chain is Putative amidase AmiC (amiC) from Mycobacterium bovis (strain ATCC BAA-935 / AF2122/97).